Here is a 554-residue protein sequence, read N- to C-terminus: Glucose-6-phosphate isomerase (554 aa).

Catalysis depends on Glu359, which acts as the Proton donor. Residues His390 and Lys518 contribute to the active site.

The protein belongs to the GPI family.

It is found in the cytoplasm. The catalysed reaction is alpha-D-glucose 6-phosphate = beta-D-fructose 6-phosphate. It participates in carbohydrate biosynthesis; gluconeogenesis. Its pathway is carbohydrate degradation; glycolysis; D-glyceraldehyde 3-phosphate and glycerone phosphate from D-glucose: step 2/4. In terms of biological role, catalyzes the reversible isomerization of glucose-6-phosphate to fructose-6-phosphate. The polypeptide is Glucose-6-phosphate isomerase (Stutzerimonas stutzeri (strain A1501) (Pseudomonas stutzeri)).